The primary structure comprises 118 residues: Thioredoxin H5 (118 aa).

Alanine 2 is subject to N-acetylalanine. Positions 2 to 113 constitute a Thioredoxin domain; that stretch reads AGEGEVIACH…INEKLMKHGG (112 aa). Active-site nucleophile residues include cysteine 39 and cysteine 42. Cysteine 39 and cysteine 42 are joined by a disulfide.

The protein belongs to the thioredoxin family. Plant H-type subfamily. As to quaternary structure, interacts with MDH1.

Its subcellular location is the cytoplasm. Functionally, thiol-disulfide oxidoreductase involved in response to pathogens and oxidative stresses. Required for the response to victorin, a phytotoxin which induces programmed cell death in sensitive plants. Possesses insulin disulfide bonds reducing activity. This is Thioredoxin H5 (TRX5) from Arabidopsis thaliana (Mouse-ear cress).